Here is a 211-residue protein sequence, read N- to C-terminus: Proteasome subunit beta 2 (211 aa).

Positions 1–17 (MVIMGNELQLENKILKG) are cleaved as a propeptide — removed in mature form; by autocatalysis. The active-site Nucleophile is the T18.

It belongs to the peptidase T1B family. In terms of assembly, the 20S proteasome core is composed of 14 alpha and 14 beta subunits that assemble into four stacked heptameric rings, resulting in a barrel-shaped structure. The two inner rings, each composed of seven catalytic beta subunits, are sandwiched by two outer rings, each composed of seven alpha subunits. The catalytic chamber with the active sites is on the inside of the barrel. Has a gated structure, the ends of the cylinder being occluded by the N-termini of the alpha-subunits. Is capped at one or both ends by the proteasome regulatory ATPase, PAN.

The protein resides in the cytoplasm. It carries out the reaction Cleavage of peptide bonds with very broad specificity.. The formation of the proteasomal ATPase PAN-20S proteasome complex, via the docking of the C-termini of PAN into the intersubunit pockets in the alpha-rings, triggers opening of the gate for substrate entry. Interconversion between the open-gate and close-gate conformations leads to a dynamic regulation of the 20S proteasome proteolysis activity. Component of the proteasome core, a large protease complex with broad specificity involved in protein degradation. The sequence is that of Proteasome subunit beta 2 from Saccharolobus solfataricus (strain 98/2) (Sulfolobus solfataricus).